A 113-amino-acid polypeptide reads, in one-letter code: Iron-sulfur cluster insertion protein ErpA (113 aa).

The iron-sulfur cluster site is built by Cys41, Cys105, and Cys107.

This sequence belongs to the HesB/IscA family. As to quaternary structure, homodimer. The cofactor is iron-sulfur cluster.

Functionally, required for insertion of 4Fe-4S clusters for at least IspG. The polypeptide is Iron-sulfur cluster insertion protein ErpA (Actinobacillus pleuropneumoniae serotype 7 (strain AP76)).